The following is a 987-amino-acid chain: Voltage-gated delayed rectifier potassium channel KCNH1 (987 aa).

At 1–220 (MTMAGGRKGL…LHYCVFKTTW (220 aa)) the chain is on the cytoplasmic side. The region spanning 14–94 (QNTFLENIVR…QTFENYEMNS (81 aa)) is the PAS domain. A PAC domain is found at 93–145 (NSFEILMYKKNRTPVWFFVKIAPIRNEQDKVVLFLCTFSDITAFKQPIEDDSC). A required for phosphatidylinositol bisphosphate binding region spans residues 151–162 (FARLTRALTSSR). The helical transmembrane segment at 221 to 241 (DWIILILTFYTAILVPYNVSF) threads the bilayer. The Extracellular portion of the chain corresponds to 242–248 (KTRQNNV). Residues 249-269 (AWLVVDSIVDVIFLVDIVLNF) form a helical membrane-spanning segment. Topologically, residues 270–290 (HTTFVGPAGEVISDPKLIRMN) are cytoplasmic. The chain crosses the membrane as a helical span at residues 291–309 (YLKTWFVIDLLSCLPYDVI). The Extracellular portion of the chain corresponds to 310 to 345 (NAFENVDEVSAFMGDPGKIGFADQIPPPLEGRESQG). Residues 346–368 (ISSLFSSLKVVRLLRLGRVARKL) form a helical; Voltage-sensor membrane-spanning segment. The Cytoplasmic segment spans residues 369-377 (DHYIEYGAA). A helical membrane pass occupies residues 378–399 (VLVLLVCVFGLAAHWMACIWYS). The Extracellular segment spans residues 400 to 448 (IGDYEIFDEDTKTIRNNSWLYQLAMDIGTPYQFNGSGSGKWEGGPSKNS). 2 N-linked (GlcNAc...) asparagine glycosylation sites follow: asparagine 415 and asparagine 433. Residues 449–470 (VYISSLYFTMTSLTSVGFGNIA) constitute an intramembrane region (pore-forming). The Selectivity filter signature appears at 463–468 (SVGFGN). At 471 to 477 (PSTDIEK) the chain is on the extracellular side. A helical membrane pass occupies residues 478-498 (IFAVAIMMIGSLLYATIFGNV). The Cytoplasmic portion of the chain corresponds to 499-987 (TTIFQQMYAN…ESERDIFGAS (489 aa)). The interval 673-770 (KRDALQKVLE…LDDLDVEKGS (98 aa)) is calmodulin-binding. The interval 699 to 701 (YNL) is interaction with cyclic nucleotide-binding pocket. The interval 922–962 (AAVLEVKHELKEDIKALSTKMTSIEKQLSEILRILTSRRSS) is CAD (involved in subunit assembly). Residues 960–987 (RSSQSPQELFEISRPQSPESERDIFGAS) are disordered. 3 positions are modified to phosphoserine: serine 972, serine 976, and serine 979. Residues 978–987 (ESERDIFGAS) are compositionally biased toward basic and acidic residues.

Belongs to the potassium channel family. H (Eag) (TC 1.A.1.20) subfamily. Kv10.1/KCNH1 sub-subfamily. In terms of assembly, homomultimer. The potassium channel is composed of a homo- or heterotetrameric complex of pore-forming alpha subunits that can associate with modulating beta subunits. Heteromultimer with KCNH5/EAG2. Interacts with ALG10B. Interacts with RABEP1. Interacts (via C-terminus) with CTTN. Interacts (via C-terminal cytoplasmic region) with Ca(2+)-bound calmodulin. In terms of processing, channel activity is regulated via tyrosine phosphorylation/dephosphorylation by SRC and PTPN6. As to expression, detected in cerebellum, cortex and retina.

Its subcellular location is the cell membrane. The protein localises to the nucleus inner membrane. It is found in the cell projection. It localises to the dendrite. The protein resides in the axon. Its subcellular location is the presynaptic cell membrane. The protein localises to the perikaryon. It is found in the postsynaptic density membrane. It localises to the early endosome membrane. It catalyses the reaction K(+)(in) = K(+)(out). Channel activity is inhibited by interaction with Ca(2+)-bound calmodulin. Interaction of a single pore-forming alpha subunit with a calmodulin chain is sufficient to promote channel closure. Extracellular magnesium ion concentrations up to 4 mM modulate channel activity by slowing down current activation in a reversible fashion. Channel activity is not regulated by cyclic nucleotides. Channel activity is inhibited by binding intracellular phosphatidylinositol-3,5-bisphosphate and phosphatidylinositol-4,5-bisphosphate (PIP2), but is not inhibited by phosphatidylinositol 4-phosphate. Functionally, pore-forming (alpha) subunit of a voltage-gated delayed rectifier potassium channel that mediates outward-rectifying potassium currents which, on depolarization, reaches a steady-state level and do not inactivate. The activation kinetics depend on the prepulse potential and external divalent cation concentration. With negative prepulses, the current activation is delayed and slowed down several fold, whereas more positive prepulses speed up activation. The time course of activation is biphasic with a fast and a slowly activating current component. Activates at more positive membrane potentials and exhibit a steeper activation curve. Channel properties are modulated by subunit assembly. Mediates IK(NI) current in myoblasts. Involved in the regulation of cell proliferation and differentiation, in particular adipogenic and osteogenic differentiation in bone marrow-derived mesenchymal stem cells (MSCs). The protein is Voltage-gated delayed rectifier potassium channel KCNH1 of Bos taurus (Bovine).